The following is a 132-amino-acid chain: uncharacterized protein (132 aa).

This is an uncharacterized protein from Escherichia coli.